Here is a 312-residue protein sequence, read N- to C-terminus: tRNA uridine(34) hydroxylase (312 aa).

A Rhodanese domain is found at 123-216 (DRDDVVVLDV…YGIEQGGEDF (94 aa)). Cys176 acts as the Cysteine persulfide intermediate in catalysis.

The protein belongs to the TrhO family.

It carries out the reaction uridine(34) in tRNA + AH2 + O2 = 5-hydroxyuridine(34) in tRNA + A + H2O. Its function is as follows. Catalyzes oxygen-dependent 5-hydroxyuridine (ho5U) modification at position 34 in tRNAs. This Cytophaga hutchinsonii (strain ATCC 33406 / DSM 1761 / CIP 103989 / NBRC 15051 / NCIMB 9469 / D465) protein is tRNA uridine(34) hydroxylase.